Consider the following 315-residue polypeptide: Protein OPG185 (315 aa).

Residues 1–16 (MTRLPILLLLISLVYA) form the signal peptide. An Ig-like V-type domain is found at 17–121 (TPFPQTSKKI…NDTDKVDYEE (105 aa)). Residues 17–279 (TPFPQTSKKI…SNYKTKDFVE (263 aa)) are Virion surface-facing. A disulfide bridge connects residues cysteine 34 and cysteine 103. 4 N-linked (GlcNAc...) asparagine; by host glycosylation sites follow: asparagine 37, asparagine 69, asparagine 112, and asparagine 161. Over residues 191–202 (SINTVSASSGES) the composition is skewed to polar residues. Residues 191–213 (SINTVSASSGESTTDETPEPITD) form a disordered region. N-linked (GlcNAc...) asparagine; by host glycosylation occurs at asparagine 254. A helical transmembrane segment spans residues 280–303 (IFGITALIILSAVAIFCITYYIYN). Residues 304-315 (KRSRKYKTENKV) are Intravirion-facing.

This sequence belongs to the orthopoxvirus OPG185 family. In terms of assembly, heterodimerizes with OPG040. The heterodimer OPG185-OPG040 interacts with components of the entry fusion complex OPG143 and OPG094. Heterodimer with C3/VPC protein; disulfide-linked. Glycosylated; contains phosphate and sulfate-substituted glycans. O-glycosylation is required for hemagglutination and hemadsorption activities of infected cell membranes.

The protein resides in the virion membrane. It is found in the host membrane. Its function is as follows. Prevents cell to cell fusion by interacting with and directing the viral OPG040 protein on the host plasma membrane. The OPG185-OPG040 complex associates with components of the entry fusion complex (EFC) presumably to avoid superinfection and syncytium formation. Via its interaction with C3/VCP protein, protects the infected cell and probably also the extracellular enveloped virus from complement attack. The polypeptide is Protein OPG185 (OPG185) (Homo sapiens (Human)).